The chain runs to 1134 residues: ATP-dependent helicase/deoxyribonuclease subunit B (1134 aa).

An ATP-binding site is contributed by 8–15; that stretch reads GRAGSGKS. The [4Fe-4S] cluster site is built by Cys-771, Cys-1089, Cys-1092, and Cys-1098.

It belongs to the helicase family. AddB/RexB type 1 subfamily. Heterodimer of AddA and AddB. Mg(2+) serves as cofactor. The cofactor is [4Fe-4S] cluster.

The heterodimer acts as both an ATP-dependent DNA helicase and an ATP-dependent, dual-direction single-stranded exonuclease. Recognizes the chi site generating a DNA molecule suitable for the initiation of homologous recombination. The AddB subunit has 5' -&gt; 3' nuclease activity but not helicase activity. This chain is ATP-dependent helicase/deoxyribonuclease subunit B, found in Clostridium novyi (strain NT).